A 72-amino-acid chain; its full sequence is DNA-directed RNA polymerase subunit omega (72 aa).

The protein belongs to the RNA polymerase subunit omega family. As to quaternary structure, the RNAP catalytic core consists of 2 alpha, 1 beta, 1 beta' and 1 omega subunit. When a sigma factor is associated with the core the holoenzyme is formed, which can initiate transcription.

The enzyme catalyses RNA(n) + a ribonucleoside 5'-triphosphate = RNA(n+1) + diphosphate. Promotes RNA polymerase assembly. Latches the N- and C-terminal regions of the beta' subunit thereby facilitating its interaction with the beta and alpha subunits. In Laribacter hongkongensis (strain HLHK9), this protein is DNA-directed RNA polymerase subunit omega.